A 137-amino-acid chain; its full sequence is Methylglyoxal synthase (137 aa).

The MGS-like domain occupies 1-137 (MKIALIAHDK…NLVRGGEPNV (137 aa)). Substrate is bound by residues His-8, Lys-12, 34–37 (TGTT), and 54–55 (SG). Asp-60 acts as the Proton donor/acceptor in catalysis. His-87 is a binding site for substrate.

Belongs to the methylglyoxal synthase family.

It carries out the reaction dihydroxyacetone phosphate = methylglyoxal + phosphate. In terms of biological role, catalyzes the formation of methylglyoxal from dihydroxyacetone phosphate. This Bacillus velezensis (strain DSM 23117 / BGSC 10A6 / LMG 26770 / FZB42) (Bacillus amyloliquefaciens subsp. plantarum) protein is Methylglyoxal synthase.